We begin with the raw amino-acid sequence, 817 residues long: MSEEKTYKRVEQDDPVPELDIKQGPVRPFIVTDPSAELASLRTMVTLKEKLLVACLAVFTAVIRLHGLAWPDSVVFDEVHFGGFASQYIRGTYFMDVHPPLAKMLYAGVASLGGFQGDFDFENIGDSFPSTTPYVLMRFFSASLGALTVILMYMTLRYSGVRMWVALMSAICFAVENSYVTISRYILLDAPLMFFIAAAVYSFKKYEMYPANSLNAYKSLLATGIALGMASSSKWVGLFTVTWVGLLCIWRLWFMIGDLTKSSKSIFKVAFAKLAFLLGVPFALYLVFFYIHFQSLTLDGDGASFFSPEFRSTLKNNKIPQNVVADVGIGSIISLRHLSTMGGYLHSHSHNYPAGSEQQQSTLYPHMDANNDWLLELYNAPGESLTTFQNLTDGTKVRLFHTVTRCRLHSHDHKPPVSESSDWQKEVSCYGYSGFDGDANDDWVVEIDKKNSAPGVAQERVIALDTKFRLRHAMTGCYLFSHEVKLPAWGFEQQEVTCASSGRHDLTLWYVENNSNPLLPEDTKRISYKPASFISKFIESHKKMWHINKNLVEPHVYESQPTSWPFLLRGISYWGENNRNVYLLGNAIVWWAVTAFIGIFGLIVITELFSWQLGKPILKDSKVVNFHVQVIHYLLGFAVHYAPSFLMQRQMFLHHYLPAYYFGILALGHALDIIVSYVFRSKRQMGYAVVITFLAASVYFFKSFSPIIYGTPWTQELCQKSQWLSGWDYNCNTYFSSLEEYKNQTLTKRESQPAATSTVEEITIEGDGPSYEDLMNEDGKKIFKDTEGNELDPEVVKKMLEEEGANILKVEKRAVLE.

Ser-2 is subject to N-acetylserine. Topologically, residues 2 to 50 (SEEKTYKRVEQDDPVPELDIKQGPVRPFIVTDPSAELASLRTMVTLKEK) are cytoplasmic. Residues 51–70 (LLVACLAVFTAVIRLHGLAW) traverse the membrane as a helical segment. At 71-135 (PDSVVFDEVH…DSFPSTTPYV (65 aa)) the chain is on the lumenal side. The helical transmembrane segment at 136–154 (LMRFFSASLGALTVILMYM) threads the bilayer. Over 155 to 179 (TLRYSGVRMWVALMSAICFAVENSY) the chain is Cytoplasmic. A helical membrane pass occupies residues 180–200 (VTISRYILLDAPLMFFIAAAV). Topologically, residues 201 to 234 (YSFKKYEMYPANSLNAYKSLLATGIALGMASSSK) are lumenal. Residues 235–259 (WVGLFTVTWVGLLCIWRLWFMIGDL) form a helical membrane-spanning segment. The Cytoplasmic portion of the chain corresponds to 260–273 (TKSSKSIFKVAFAK). Residues 274–291 (LAFLLGVPFALYLVFFYI) traverse the membrane as a helical segment. Residues 292–584 (HFQSLTLDGD…GENNRNVYLL (293 aa)) are Lumenal-facing. MIR domains are found at residues 324–378 (VADV…LELY), 388–448 (FQNL…VEID), and 459–514 (ERVI…VENN). Asn-390 and Asn-513 each carry an N-linked (GlcNAc...) asparagine glycan. A helical membrane pass occupies residues 585–605 (GNAIVWWAVTAFIGIFGLIVI). The Cytoplasmic portion of the chain corresponds to 606 to 685 (TELFSWQLGK…SYVFRSKRQM (80 aa)). Residues 686–710 (GYAVVITFLAASVYFFKSFSPIIYG) traverse the membrane as a helical segment. The Lumenal segment spans residues 711–817 (TPWTQELCQK…LKVEKRAVLE (107 aa)). Asn-743 is a glycosylation site (N-linked (GlcNAc...) asparagine).

This sequence belongs to the glycosyltransferase 39 family. As to quaternary structure, PMT1 and PMT2 form a functional heterodimer. The complex interacts with endoplasmic reticulum proteins EMP24, ERV25, ERP1, ERP2, CDC48, HRD1, USA1, YOS9, ERO1, PDI1, UBR1, Cue4, DFM1 and TED1. Forms also a minor complex with PMT3.

It localises to the endoplasmic reticulum membrane. It catalyses the reaction a di-trans,poly-cis-dolichyl beta-D-mannosyl phosphate + L-seryl-[protein] = 3-O-(alpha-D-mannosyl)-L-seryl-[protein] + a di-trans,poly-cis-dolichyl phosphate + H(+). It carries out the reaction a di-trans,poly-cis-dolichyl beta-D-mannosyl phosphate + L-threonyl-[protein] = 3-O-(alpha-D-mannosyl)-L-threonyl-[protein] + a di-trans,poly-cis-dolichyl phosphate + H(+). It participates in protein modification; protein glycosylation. Its function is as follows. Protein O-mannosyltransferase involved in O-glycosylation which is essential for cell wall rigidity. Forms a heterodimeric complex with PMT2 and more rarely with PMT3 to transfer mannose from Dol-P-mannose to Ser or Thr residues on proteins. The PMT1-PMT2 complex participates in oxidative protein folding, ER-associated protein degradation (ERAD), as well as ER export. Required for incorporation of proteins in the cell wall. The sequence is that of Dolichyl-phosphate-mannose--protein mannosyltransferase 1 from Saccharomyces cerevisiae (strain ATCC 204508 / S288c) (Baker's yeast).